A 119-amino-acid polypeptide reads, in one-letter code: Small ribosomal subunit protein uS17 (119 aa).

The segment covering 1 to 21 (MAEAKTGAKATKSAAAGAADG) has biased composition (low complexity). The disordered stretch occupies residues 1–44 (MAEAKTGAKATKSAAAGAADGASKEKGPKHTPSTPKPRGRRKTR).

This sequence belongs to the universal ribosomal protein uS17 family. Part of the 30S ribosomal subunit.

Functionally, one of the primary rRNA binding proteins, it binds specifically to the 5'-end of 16S ribosomal RNA. The chain is Small ribosomal subunit protein uS17 from Mycobacterium marinum (strain ATCC BAA-535 / M).